The chain runs to 310 residues: Ribosomal RNA small subunit methyltransferase H (310 aa).

Residues 35 to 37, Asp52, Phe79, Asp100, and Gln107 each bind S-adenosyl-L-methionine; that span reads GGH.

It belongs to the methyltransferase superfamily. RsmH family.

The protein localises to the cytoplasm. The catalysed reaction is cytidine(1402) in 16S rRNA + S-adenosyl-L-methionine = N(4)-methylcytidine(1402) in 16S rRNA + S-adenosyl-L-homocysteine + H(+). Specifically methylates the N4 position of cytidine in position 1402 (C1402) of 16S rRNA. The polypeptide is Ribosomal RNA small subunit methyltransferase H (Anaeromyxobacter sp. (strain Fw109-5)).